Consider the following 309-residue polypeptide: uncharacterized protein (309 aa).

Disordered stretches follow at residues 1-94 (IGEV…RQQI) and 286-309 (HTRNSKFHPPAKNTPPPLEDPPRG). Positions 30–43 (PAQPPSPAPTPSRT) are enriched in pro residues. Residues 58-67 (RSKTPDKRSA) are compositionally biased toward basic and acidic residues. Over residues 297 to 309 (KNTPPPLEDPPRG) the composition is skewed to pro residues.

This is an uncharacterized protein from Homo sapiens (Human).